The sequence spans 473 residues: Lactate utilization protein B (473 aa).

4Fe-4S ferredoxin-type domains follow at residues 303-333 and 352-381; these read GTAFQPVLQCIRCAACINVCPVYRHVGGHSY and YDDYQELPFASSLCAACTDACPVKIPLHEL. Residues Cys-312, Cys-315, Cys-318, Cys-322, Cys-365, Cys-368, and Cys-372 each coordinate [4Fe-4S] cluster.

This sequence belongs to the LutB/YkgF family.

Its function is as follows. Is involved in L-lactate degradation and allows cells to grow with lactate as the sole carbon source. Has probably a role as an electron transporter during oxidation of L-lactate. The chain is Lactate utilization protein B from Bacillus pumilus (strain SAFR-032).